Consider the following 418-residue polypeptide: Protein fuzzy homolog (418 aa).

It belongs to the fuzzy family. As to quaternary structure, component of the CPLANE (ciliogenesis and planar polarity effectors) complex, composed of INTU, FUZ and WDPCP. Interacts with CPLANE2. Interacts with CPLANE1.

It is found in the cytoplasm. Its subcellular location is the cytoskeleton. The protein resides in the cilium basal body. Functionally, probable planar cell polarity effector involved in cilium biogenesis. May regulate protein and membrane transport to the cilium. Proposed to function as core component of the CPLANE (ciliogenesis and planar polarity effectors) complex involved in the recruitment of peripheral IFT-A proteins to basal bodies. May regulate the morphogenesis of hair follicles which depends on functional primary cilia. Binds phosphatidylinositol 3-phosphate with highest affinity, followed by phosphatidylinositol 4-phosphate and phosphatidylinositol 5-phosphate. In Homo sapiens (Human), this protein is Protein fuzzy homolog (FUZ).